The primary structure comprises 61 residues: Large ribosomal subunit protein uL30 (61 aa).

The protein belongs to the universal ribosomal protein uL30 family. As to quaternary structure, part of the 50S ribosomal subunit.

The protein is Large ribosomal subunit protein uL30 of Chlorobium phaeovibrioides (strain DSM 265 / 1930) (Prosthecochloris vibrioformis (strain DSM 265)).